A 633-amino-acid polypeptide reads, in one-letter code: Dynein axonemal assembly factor 1 (633 aa).

Residues Met-1–Pro-80 are disordered. The span at Ala-22–Glu-42 shows a compositional bias: basic and acidic residues. Positions Gly-46–Gly-60 are enriched in low complexity. Basic and acidic residues predominate over residues His-70–Pro-80. 6 LRR repeats span residues Ala-101–Thr-123, Gly-124–Ser-145, Glu-146–Gln-167, Lys-168–Pro-189, Val-190–Arg-211, and Gln-215–Glu-236. The region spanning Asn-249–Trp-288 is the LRRCT domain. The span at Glu-326 to Lys-344 shows a compositional bias: basic and acidic residues. Disordered stretches follow at residues Glu-326–Lys-364 and Leu-404–Asp-436. Residue Ser-349 is modified to Phosphoserine. Residues Ala-352 to Lys-364 are compositionally biased toward basic and acidic residues. The segment covering Thr-413–Glu-427 has biased composition (low complexity). The residue at position 462 (Thr-462) is a Phosphothreonine. Phosphoserine occurs at positions 465 and 488. Polar residues-rich tracts occupy residues Thr-538–Pro-555 and Gly-568–Gly-592. Positions Thr-538–Asp-633 are disordered.

Belongs to the DNAAF1 family.

It localises to the cell projection. It is found in the cilium. Cilium-specific protein required for the stability of the ciliary architecture. Plays a role in cytoplasmic preassembly of dynein arms. Involved in regulation of microtubule-based cilia and actin-based brush border microvilli. This chain is Dynein axonemal assembly factor 1 (Dnaaf1), found in Rattus norvegicus (Rat).